We begin with the raw amino-acid sequence, 461 residues long: Probable Xaa-Pro aminopeptidase PEPP (461 aa).

Positions 257, 268, 391, and 431 each coordinate Mn(2+).

It belongs to the peptidase M24B family. The cofactor is Mn(2+).

It catalyses the reaction Release of any N-terminal amino acid, including proline, that is linked to proline, even from a dipeptide or tripeptide.. Catalyzes the removal of a penultimate prolyl residue from the N-termini of peptides. This Colletotrichum graminicola (strain M1.001 / M2 / FGSC 10212) (Maize anthracnose fungus) protein is Probable Xaa-Pro aminopeptidase PEPP (PEPP).